A 244-amino-acid polypeptide reads, in one-letter code: MSWQRPDNRTAAQLRPVSFERHFTRYAPGSVLVKFGHTHVLCTASVAEEVPPFLQNTGQGWLTAEYRMLPGATQQRQPREMLKLSGRTAEIQRLIGRSLRAALDFRKLGSRTITVDADVLQADGGTRTAAITGGYVALHDAITWLYKQGALDPAQGSPLRQQVAALSVGIVQGEVLVDLCYEEDSQAEVDMNIVMNEQGSFIEIQGTAEAACFSRPQLLQMLEMAQAGIQELLQAQRQALNLER.

Residues Arg87 and 125-127 contribute to the phosphate site; that span reads GTR.

This sequence belongs to the RNase PH family. In terms of assembly, homohexameric ring arranged as a trimer of dimers.

The enzyme catalyses tRNA(n+1) + phosphate = tRNA(n) + a ribonucleoside 5'-diphosphate. Functionally, phosphorolytic 3'-5' exoribonuclease that plays an important role in tRNA 3'-end maturation. Removes nucleotide residues following the 3'-CCA terminus of tRNAs; can also add nucleotides to the ends of RNA molecules by using nucleoside diphosphates as substrates, but this may not be physiologically important. Probably plays a role in initiation of 16S rRNA degradation (leading to ribosome degradation) during starvation. The sequence is that of Ribonuclease PH from Synechococcus sp. (strain JA-2-3B'a(2-13)) (Cyanobacteria bacterium Yellowstone B-Prime).